Consider the following 172-residue polypeptide: Zinc finger protein 580 (172 aa).

The interval 1-93 (MLLLPPRPPH…GEPGPRKGYS (93 aa)) is disordered. A compositionally biased stretch (pro residues) spans 19–30 (MDPPPPKAPPFP). K31 participates in a covalent cross-link: Glycyl lysine isopeptide (Lys-Gly) (interchain with G-Cter in SUMO2). Over residues 31 to 44 (KAEGPSSTPSSAAG) the composition is skewed to low complexity. A compositionally biased stretch (pro residues) spans 75 to 86 (GPPQREAPPGEP). A C2H2-type 1 zinc finger spans residues 92 to 114 (YSCPECARVFASPLRLQSHRVSH). Residue K118 forms a Glycyl lysine isopeptide (Lys-Gly) (interchain with G-Cter in SUMO2) linkage. C2H2-type zinc fingers lie at residues 120–142 (FTCG…RATH) and 150–172 (HTCP…VRLH).

As to quaternary structure, interacts with SMAD2. As to expression, expressed in endothelial cells.

The protein resides in the nucleus. Involved in the regulation of endothelial cell proliferation and migration. Mediates H(2)O(2)-induced leukocyte chemotaxis by elevating interleukin-8 production and may play a role in inflammation. May be involved in transcriptional regulation. This Homo sapiens (Human) protein is Zinc finger protein 580 (ZNF580).